Here is a 577-residue protein sequence, read N- to C-terminus: Zinc finger-containing ubiquitin peptidase 1 (577 aa).

Residues 2-24 (LSCNICGETVNSEPDMKAHLIVH) form a C2H2-type 1 zinc finger. A C2H2-type 2; atypical zinc finger spans residues 29 to 52 (IICPFCKLSGINYNEICFHIETVH). Positions 124–137 (ESRKYQKSREKKPG) are enriched in basic and acidic residues. A disordered region spans residues 124-145 (ESRKYQKSREKKPGLSEAQGSI). Residues 153–176 (PECPFCGKIEGCSQDMEIHVKTKH) form a C2H2-type 3; atypical zinc finger. The C2H2-type 4 zinc-finger motif lies at 192-214 (YDCPMCGLVCTNYHILQEHVDLH). The segment at 225–247 (DRVQCSSDRELAHRLQQEEDRKR) is MIU. The tract at residues 238 to 260 (RLQQEEDRKRKSEESRQEREEFQ) is disordered. The tract at residues 248–273 (KSEESRQEREEFQKLQRQYGLDNSGG) is zUBD/ZHA. Lys261 carries the post-translational modification N6-acetyllysine. The Nucleophile role is filled by Cys359. The active-site Proton acceptor is the His490. Asp511 is an active-site residue.

Belongs to the peptidase C78 family. ZUFSP subfamily. Interacts with RPA1 and RPA2.

The protein resides in the cytoplasm. Its subcellular location is the nucleus. It carries out the reaction Thiol-dependent hydrolysis of ester, thioester, amide, peptide and isopeptide bonds formed by the C-terminal Gly of ubiquitin (a 76-residue protein attached to proteins as an intracellular targeting signal).. Its function is as follows. Deubiquitinase with endodeubiquitinase activity that specifically interacts with and cleaves 'Lys-63'-linked long polyubiquitin chains. Shows only weak activity against 'Lys-11' and 'Lys-48'-linked chains. Plays an important role in genome stability pathways, functioning to prevent spontaneous DNA damage and also promote cellular survival in response to exogenous DNA damage. Modulates the ubiquitination status of replication protein A (RPA) complex proteins in response to replication stress. In Mus musculus (Mouse), this protein is Zinc finger-containing ubiquitin peptidase 1.